The sequence spans 331 residues: Biotin synthase (331 aa).

Residues Asn53–Arg272 form the Radical SAM core domain. [4Fe-4S] cluster-binding residues include Cys68, Cys72, and Cys75. 4 residues coordinate [2Fe-2S] cluster: Cys112, Cys143, Cys203, and Arg276.

It belongs to the radical SAM superfamily. Biotin synthase family. As to quaternary structure, homodimer. [4Fe-4S] cluster is required as a cofactor. The cofactor is [2Fe-2S] cluster.

It carries out the reaction (4R,5S)-dethiobiotin + (sulfur carrier)-SH + 2 reduced [2Fe-2S]-[ferredoxin] + 2 S-adenosyl-L-methionine = (sulfur carrier)-H + biotin + 2 5'-deoxyadenosine + 2 L-methionine + 2 oxidized [2Fe-2S]-[ferredoxin]. It functions in the pathway cofactor biosynthesis; biotin biosynthesis; biotin from 7,8-diaminononanoate: step 2/2. Catalyzes the conversion of dethiobiotin (DTB) to biotin by the insertion of a sulfur atom into dethiobiotin via a radical-based mechanism. This chain is Biotin synthase, found in Bradyrhizobium diazoefficiens (strain JCM 10833 / BCRC 13528 / IAM 13628 / NBRC 14792 / USDA 110).